The primary structure comprises 363 residues: 3-isopropylmalate dehydrogenase (363 aa).

79–92 serves as a coordination point for NAD(+); the sequence is GPKWEHLPPNDQPE. Substrate-binding residues include R100, R110, R139, and D228. Positions 228, 252, and 256 each coordinate Mg(2+). 286 to 298 provides a ligand contact to NAD(+); that stretch reads GSAPDIAGKNIAN.

It belongs to the isocitrate and isopropylmalate dehydrogenases family. LeuB type 1 subfamily. In terms of assembly, homodimer. The cofactor is Mg(2+). Mn(2+) serves as cofactor.

The protein localises to the cytoplasm. It catalyses the reaction (2R,3S)-3-isopropylmalate + NAD(+) = 4-methyl-2-oxopentanoate + CO2 + NADH. Its pathway is amino-acid biosynthesis; L-leucine biosynthesis; L-leucine from 3-methyl-2-oxobutanoate: step 3/4. Its function is as follows. Catalyzes the oxidation of 3-carboxy-2-hydroxy-4-methylpentanoate (3-isopropylmalate) to 3-carboxy-4-methyl-2-oxopentanoate. The product decarboxylates to 4-methyl-2 oxopentanoate. The polypeptide is 3-isopropylmalate dehydrogenase (Vibrio parahaemolyticus serotype O3:K6 (strain RIMD 2210633)).